Reading from the N-terminus, the 610-residue chain is E-selectin (610 aa).

The first 21 residues, 1-21, serve as a signal peptide directing secretion; it reads MIASQFLSALTLVLLIKESGA. The C-type lectin domain occupies 22 to 139; that stretch reads WSYNTSTEAM…CSKKKLALCY (118 aa). Topologically, residues 22 to 556 are extracellular; that stretch reads WSYNTSTEAM…CEAPTESNIP (535 aa). N-linked (GlcNAc...) asparagine glycosylation is present at asparagine 25. Cystine bridges form between cysteine 40–cysteine 138, cysteine 111–cysteine 130, cysteine 143–cysteine 154, cysteine 148–cysteine 163, and cysteine 165–cysteine 174. Ca(2+)-binding residues include glutamate 101, asparagine 103, and glutamate 109. Residues 101-109, 113-118, and 126-128 contribute to the a carbohydrate site; these read EPNNRQKDE, EIYIKR, and NDE. Positions 126 and 127 each coordinate Ca(2+). Residues 140 to 175 form the EGF-like domain; sequence TAACTNTSCSGHGECVETINNYTCKCDPGFSGLKCE. N-linked (GlcNAc...) asparagine glycosylation is found at asparagine 145 and asparagine 160. Sushi domains lie at 178 to 239, 240 to 301, 303 to 364, 366 to 427, 429 to 490, and 491 to 549; these read VNCT…ACNV, VECD…TCKA, TCRA…VCEA, QCTA…TCEA, RCDA…SCQV, and VKCS…TCEA. Asparagine 179, asparagine 199, and asparagine 203 each carry an N-linked (GlcNAc...) asparagine glycan. Intrachain disulfides connect cysteine 180-cysteine 224, cysteine 193-cysteine 206, cysteine 210-cysteine 237, cysteine 242-cysteine 286, cysteine 255-cysteine 268, cysteine 272-cysteine 299, cysteine 304-cysteine 349, cysteine 335-cysteine 362, cysteine 367-cysteine 412, cysteine 398-cysteine 425, cysteine 430-cysteine 475, cysteine 461-cysteine 488, cysteine 493-cysteine 534, and cysteine 520-cysteine 547. Asparagine 265 is a glycosylation site (N-linked (GlcNAc...) asparagine). 2 N-linked (GlcNAc...) asparagine glycosylation sites follow: asparagine 312 and asparagine 332. Residues asparagine 503 and asparagine 527 are each glycosylated (N-linked (GlcNAc...) asparagine). The chain crosses the membrane as a helical span at residues 557-578; the sequence is LVAGLSAAGLSLLTLAPFLLWL. Residues 579 to 610 are Cytoplasmic-facing; that stretch reads RKCLRKAKKFVPASSCQSLESDGSYQKPSYIL.

Belongs to the selectin/LECAM family. As to quaternary structure, interacts with SELPLG/PSGL1 and PODXL2 through the sialyl Lewis X epitope. SELPLG sulfation appears not to be required for this interaction.

Its subcellular location is the cell membrane. Functionally, cell-surface glycoprotein having a role in immunoadhesion. Mediates in the adhesion of blood neutrophils in cytokine-activated endothelium through interaction with SELPLG/PSGL1. May have a role in capillary morphogenesis. The polypeptide is E-selectin (SELE) (Homo sapiens (Human)).